Reading from the N-terminus, the 159-residue chain is Pupal cuticle protein Edg-91 (159 aa).

An N-terminal signal peptide occupies residues 1–21 (MALVRVSCMLALLLIAGQGQA).

Larval (posterior) and imaginal (anterior) epidermis.

Its function is as follows. Component of the pupal cuticle. This chain is Pupal cuticle protein Edg-91 (Edg91), found in Drosophila melanogaster (Fruit fly).